The sequence spans 756 residues: DNA mismatch repair protein Mlh1 (756 aa).

Ser-2 carries the N-acetylserine modification. Lys-33 is modified (N6-acetyllysine). Residues Asn-38, Asp-63, 82-84 (TSK), and 100-104 (RGEAL) each bind ATP. An N6-acetyllysine mark is found at Lys-241 and Lys-361. 2 disordered regions span residues 355 to 378 (PSGE…SDKV) and 400 to 491 (LSKP…KEMT). Positions 362–375 (STTSLTSSSTSGSS) are enriched in low complexity. The residue at position 377 (Lys-377) is an N6-acetyllysine. Residues 410-650 (AIVTEDKTDI…LLIDNYVPPL (241 aa)) form an interaction with EXO1 region. A compositionally biased stretch (polar residues) spans 443–457 (KNQSLEGDTTKGTSE). A Nuclear localization signal motif is present at residues 471-474 (KRHR). At Ser-477 the chain carries Phosphoserine.

The protein belongs to the DNA mismatch repair MutL/HexB family. Component of the DNA mismatch repair (MMR) complex composed at least of MSH2, MSH3, MSH6, PMS1 and MLH1. Heterodimer of MLH1 and PMS2 (MutL alpha), MLH1 and PMS1 (MutL beta) or MLH1 and MLH3 (MutL gamma). Forms a ternary complex with MutS alpha (MSH2-MSH6) or MutS beta (MSH2-MSH3). Part of the BRCA1-associated genome surveillance complex (BASC), which contains BRCA1, MSH2, MSH6, MLH1, ATM, BLM, PMS2 and the RAD50-MRE11-NBS1 protein complex. This association could be a dynamic process changing throughout the cell cycle and within subnuclear domains. Interacts with MCM9; the interaction recruits MLH1 to chromatin. Interacts with MCM8. Interacts with PMS2; this interaction promotes MLH1 stability. Interacts with MBD4. Interacts with EXO1. Interacts with MTMR15/FAN1. In terms of processing, acetylated. Deacetylated by HDAC6 which prevents the MutL alpha complex, formed by the MLH1-PMS2 heterodimer, from being recruited to the MutS alpha complex, formed by the MSH2-MSH6 heterodimer, leading to tolerance of DNA damage. Post-translationally, ubiquitinated by UBR4; leading to proteasomal degradation. This ubiquitination is counteracted by the deubiquitinase USP5. Colon, lymphocytes, breast, lung, spleen, testis, prostate, thyroid, gall bladder and heart.

It is found in the nucleus. The protein resides in the chromosome. Heterodimerizes with PMS2 to form MutL alpha, a component of the post-replicative DNA mismatch repair system (MMR). DNA repair is initiated by MutS alpha (MSH2-MSH6) or MutS beta (MSH2-MSH3) binding to a dsDNA mismatch, then MutL alpha is recruited to the heteroduplex. Assembly of the MutL-MutS-heteroduplex ternary complex in presence of RFC and PCNA is sufficient to activate endonuclease activity of PMS2. It introduces single-strand breaks near the mismatch and thus generates new entry points for the exonuclease EXO1 to degrade the strand containing the mismatch. DNA methylation would prevent cleavage and therefore assure that only the newly mutated DNA strand is going to be corrected. MutL alpha (MLH1-PMS2) interacts physically with the clamp loader subunits of DNA polymerase III, suggesting that it may play a role to recruit the DNA polymerase III to the site of the MMR. Also implicated in DNA damage signaling, a process which induces cell cycle arrest and can lead to apoptosis in case of major DNA damages. Heterodimerizes with MLH3 to form MutL gamma which plays a role in meiosis. The protein is DNA mismatch repair protein Mlh1 (MLH1) of Homo sapiens (Human).